The chain runs to 279 residues: Elongation factor Ts (279 aa).

Positions 80–83 (TDFV) are involved in Mg(2+) ion dislocation from EF-Tu.

Belongs to the EF-Ts family.

The protein localises to the cytoplasm. Functionally, associates with the EF-Tu.GDP complex and induces the exchange of GDP to GTP. It remains bound to the aminoacyl-tRNA.EF-Tu.GTP complex up to the GTP hydrolysis stage on the ribosome. The protein is Elongation factor Ts of Borrelia garinii subsp. bavariensis (strain ATCC BAA-2496 / DSM 23469 / PBi) (Borreliella bavariensis).